The chain runs to 78 residues: MKLTCVVIVAVLLLTACQLITADDSRGTQKHRSLRSTTKVSKATDCIEAGNYCGPTVMKICCGFCSPYSKICMNYPKN.

Positions 1–22 are cleaved as a signal peptide; it reads MKLTCVVIVAVLLLTACQLITA. Positions 23–42 are excised as a propeptide; the sequence is DDSRGTQKHRSLRSTTKVSK. 3 disulfide bridges follow: C46-C62, C53-C65, and C61-C72.

Belongs to the conotoxin O1 superfamily. As to expression, expressed by the venom duct.

The protein resides in the secreted. In terms of biological role, omega-conotoxins act at presynaptic membranes, they bind and block voltage-gated calcium channels (Cav). In Conus striatus (Striated cone), this protein is Omega-conotoxin-like 12.